The sequence spans 306 residues: Glutaminase (306 aa).

7 residues coordinate substrate: S64, N115, E159, N166, Y190, Y242, and V260.

Belongs to the glutaminase family. In terms of assembly, homotetramer.

It catalyses the reaction L-glutamine + H2O = L-glutamate + NH4(+). This chain is Glutaminase, found in Vibrio vulnificus (strain YJ016).